We begin with the raw amino-acid sequence, 300 residues long: Soluble inorganic pyrophosphatase 6, chloroplastic (300 aa).

A chloroplast-targeting transit peptide spans 1–66; that stretch reads MAATRVLTAA…CSAIYNPQVK (66 aa). Arginine 140 provides a ligand contact to diphosphate. Tyrosine 142 functions as the Proton donor in the catalytic mechanism. Mg(2+)-binding residues include aspartate 173, aspartate 178, and aspartate 210.

It belongs to the PPase family. Mg(2+) is required as a cofactor. Expressed in all tissues tested. Highest expression in flowers, leaves and roots. Lower levels of expression in siliques, stems, ovary, stigma and pollen.

The protein localises to the plastid. Its subcellular location is the chloroplast stroma. It catalyses the reaction diphosphate + H2O = 2 phosphate + H(+). Inhibited by NaF. This is Soluble inorganic pyrophosphatase 6, chloroplastic from Arabidopsis thaliana (Mouse-ear cress).